Here is a 278-residue protein sequence, read N- to C-terminus: Probable ribosomal RNA small subunit methyltransferase A (278 aa).

S-adenosyl-L-methionine contacts are provided by His-25, Met-27, Gly-52, Glu-73, Asp-98, and Asn-114.

This sequence belongs to the class I-like SAM-binding methyltransferase superfamily. rRNA adenine N(6)-methyltransferase family. RsmA subfamily.

The protein localises to the cytoplasm. Specifically dimethylates two adjacent adenosines in the loop of a conserved hairpin near the 3'-end of 16S rRNA in the 30S particle. May play a critical role in biogenesis of 30S subunits. This Methanopyrus kandleri (strain AV19 / DSM 6324 / JCM 9639 / NBRC 100938) protein is Probable ribosomal RNA small subunit methyltransferase A.